Reading from the N-terminus, the 319-residue chain is NADH-quinone oxidoreductase subunit H 1 (319 aa).

8 helical membrane passes run 8-28 (LFNIFGILGTLLTLAALLIWI), 74-94 (LVFILAPTVVVIATLLAFAVI), 107-127 (IGLLFFLAMSSLSVYSVVLGG), 147-167 (LSYEVFMGLSLMGVVMLAGTF), 179-199 (MWFCIPQFLGLVVFLIAGIAE), 230-250 (FFVGEYLAILLISALIVTLFF), 258-278 (LPPLVWFFIKFSFFVLFFILL), and 297-317 (LMLPLALLNLVITGAVVLALD).

Belongs to the complex I subunit 1 family. As to quaternary structure, NDH-1 is composed of 14 different subunits. Subunits NuoA, H, J, K, L, M, N constitute the membrane sector of the complex.

The protein resides in the cell inner membrane. It carries out the reaction a quinone + NADH + 5 H(+)(in) = a quinol + NAD(+) + 4 H(+)(out). Functionally, NDH-1 shuttles electrons from NADH, via FMN and iron-sulfur (Fe-S) centers, to quinones in the respiratory chain. The immediate electron acceptor for the enzyme in this species is believed to be ubiquinone. Couples the redox reaction to proton translocation (for every two electrons transferred, four hydrogen ions are translocated across the cytoplasmic membrane), and thus conserves the redox energy in a proton gradient. This subunit may bind ubiquinone. The chain is NADH-quinone oxidoreductase subunit H 1 from Nitrosococcus oceani (strain ATCC 19707 / BCRC 17464 / JCM 30415 / NCIMB 11848 / C-107).